The chain runs to 593 residues: Pyruvate decarboxylase 1 (593 aa).

Over residues 1 to 19 (METETETPNGSTPCPTSAP) the composition is skewed to polar residues. The segment at 1-20 (METETETPNGSTPCPTSAPS) is disordered. Aspartate 55 and histidine 142 together coordinate substrate. The tract at residues 420-502 (DSWFNCQKLR…FLINNGGYTI (83 aa)) is thiamine pyrophosphate binding. The Mg(2+) site is built by aspartate 470, asparagine 497, and glycine 499. A substrate-binding site is contributed by glutamate 503.

It belongs to the TPP enzyme family. In terms of assembly, homotetramer. Requires a metal cation as cofactor. Thiamine diphosphate is required as a cofactor.

The catalysed reaction is a 2-oxocarboxylate + H(+) = an aldehyde + CO2. In Pisum sativum (Garden pea), this protein is Pyruvate decarboxylase 1 (PDC1).